The following is a 283-amino-acid chain: MTKIAIVTDSTAYLGPKRAKELGVIVVPLSVVFGEEAYQEEVELSSADFYEKLKHEEKLPTTSQPAVGLFVETFERLAKEGFEVVISIHLSSKISGTYQSALTAGSMVEGIEVIGYDSGISCEPQANFVAEAAKLVKEGADPQTIIDHLDEVKKRTNALFVVHDLSHLHRGGRLNAAQLVVGSLLKIKPILHFEDGSIVPLEKVRTEKKAWARVKELFAEEASSASSVKATVIHANRLDGAEKLADEIRSQFSHVDVSISHFGPVIGTHLGEGSIGLSWYIEK.

A DegV domain is found at 4–281 (IAIVTDSTAY…EGSIGLSWYI (278 aa)). Residues threonine 62 and serine 95 each coordinate hexadecanoate.

In terms of biological role, may bind long-chain fatty acids, such as palmitate, and may play a role in lipid transport or fatty acid metabolism. The polypeptide is DegV domain-containing protein BH3627 (Halalkalibacterium halodurans (strain ATCC BAA-125 / DSM 18197 / FERM 7344 / JCM 9153 / C-125) (Bacillus halodurans)).